The sequence spans 179 residues: ADP-ribosylation factor-like protein 5A (179 aa).

G2 is lipidated: N-myristoyl glycine. GTP-binding positions include 23-30, 66-70, 125-128, and A159; these read GLDNAGKT, DIGGQ, and NKQD.

The protein belongs to the small GTPase superfamily. Arf family.

Functionally, lacks ADP-ribosylation enhancing activity. This is ADP-ribosylation factor-like protein 5A (ARL5A) from Bos taurus (Bovine).